The chain runs to 479 residues: ATP synthase subunit beta (479 aa).

153-160 (GGAGVGKT) is an ATP binding site.

Belongs to the ATPase alpha/beta chains family. In terms of assembly, F-type ATPases have 2 components, CF(1) - the catalytic core - and CF(0) - the membrane proton channel. CF(1) has five subunits: alpha(3), beta(3), gamma(1), delta(1), epsilon(1). CF(0) has three main subunits: a(1), b(2) and c(9-12). The alpha and beta chains form an alternating ring which encloses part of the gamma chain. CF(1) is attached to CF(0) by a central stalk formed by the gamma and epsilon chains, while a peripheral stalk is formed by the delta and b chains.

It localises to the cell membrane. The catalysed reaction is ATP + H2O + 4 H(+)(in) = ADP + phosphate + 5 H(+)(out). Increases 2-fold following exposure to low pH. Functionally, produces ATP from ADP in the presence of a proton gradient across the membrane. The catalytic sites are hosted primarily by the beta subunits. This is ATP synthase subunit beta from Lactobacillus acidophilus (strain ATCC 700396 / NCK56 / N2 / NCFM).